The primary structure comprises 245 residues: Probable phosphatase YcdX (245 aa).

His7, His9, His15, His40, Glu73, His101, His131, Asp192, and His194 together coordinate Zn(2+).

It belongs to the PHP family. As to quaternary structure, homotrimer. Zn(2+) is required as a cofactor.

The protein is Probable phosphatase YcdX of Shigella dysenteriae serotype 1 (strain Sd197).